Reading from the N-terminus, the 230-residue chain is ATP-dependent dethiobiotin synthetase BioD (230 aa).

Residue 12–17 (DIGKTH) coordinates ATP. Threonine 16 is a binding site for Mg(2+). Lysine 37 is an active-site residue. A substrate-binding site is contributed by serine 41. ATP is bound by residues aspartate 52, 115-118 (EGAG), and 175-176 (SE). Mg(2+)-binding residues include aspartate 52 and glutamate 115.

Belongs to the dethiobiotin synthetase family. Homodimer. Requires Mg(2+) as cofactor.

Its subcellular location is the cytoplasm. It carries out the reaction (7R,8S)-7,8-diammoniononanoate + CO2 + ATP = (4R,5S)-dethiobiotin + ADP + phosphate + 3 H(+). Its pathway is cofactor biosynthesis; biotin biosynthesis; biotin from 7,8-diaminononanoate: step 1/2. Catalyzes a mechanistically unusual reaction, the ATP-dependent insertion of CO2 between the N7 and N8 nitrogen atoms of 7,8-diaminopelargonic acid (DAPA, also called 7,8-diammoniononanoate) to form a ureido ring. This is ATP-dependent dethiobiotin synthetase BioD from Caulobacter sp. (strain K31).